A 323-amino-acid chain; its full sequence is Beta-ketoacyl-[acyl-carrier-protein] synthase III (323 aa).

Residues cysteine 114 and histidine 250 contribute to the active site. Residues 251-255 (QANIR) are ACP-binding. The active site involves asparagine 280.

The protein belongs to the thiolase-like superfamily. FabH family. As to quaternary structure, homodimer.

It localises to the cytoplasm. The catalysed reaction is malonyl-[ACP] + acetyl-CoA + H(+) = 3-oxobutanoyl-[ACP] + CO2 + CoA. It participates in lipid metabolism; fatty acid biosynthesis. In terms of biological role, catalyzes the condensation reaction of fatty acid synthesis by the addition to an acyl acceptor of two carbons from malonyl-ACP. Catalyzes the first condensation reaction which initiates fatty acid synthesis and may therefore play a role in governing the total rate of fatty acid production. Possesses both acetoacetyl-ACP synthase and acetyl transacylase activities. Its substrate specificity determines the biosynthesis of branched-chain and/or straight-chain of fatty acids. The polypeptide is Beta-ketoacyl-[acyl-carrier-protein] synthase III (Ruegeria sp. (strain TM1040) (Silicibacter sp.)).